The following is a 268-amino-acid chain: Adenosylcobinamide-GDP ribazoletransferase (268 aa).

6 consecutive transmembrane segments (helical) span residues Ile54 to Trp74, Ala80 to Ser100, Ile124 to Ala144, Trp150 to Val170, Ala202 to Val222, and Gly243 to Met263.

The protein belongs to the CobS family. Mg(2+) is required as a cofactor.

Its subcellular location is the cell membrane. The catalysed reaction is alpha-ribazole + adenosylcob(III)inamide-GDP = adenosylcob(III)alamin + GMP + H(+). The enzyme catalyses alpha-ribazole 5'-phosphate + adenosylcob(III)inamide-GDP = adenosylcob(III)alamin 5'-phosphate + GMP + H(+). Its pathway is cofactor biosynthesis; adenosylcobalamin biosynthesis; adenosylcobalamin from cob(II)yrinate a,c-diamide: step 7/7. Functionally, joins adenosylcobinamide-GDP and alpha-ribazole to generate adenosylcobalamin (Ado-cobalamin). Also synthesizes adenosylcobalamin 5'-phosphate from adenosylcobinamide-GDP and alpha-ribazole 5'-phosphate. The sequence is that of Adenosylcobinamide-GDP ribazoletransferase from Roseiflexus sp. (strain RS-1).